Here is a 506-residue protein sequence, read N- to C-terminus: Cobyric acid synthase (506 aa).

Residues 251–448 (DITIAIVQLP…LHGLFDSDAF (198 aa)) form the GATase cobBQ-type domain. C332 acts as the Nucleophile in catalysis. H440 is a catalytic residue.

The protein belongs to the CobB/CobQ family. CobQ subfamily.

The protein operates within cofactor biosynthesis; adenosylcobalamin biosynthesis. Catalyzes amidations at positions B, D, E, and G on adenosylcobyrinic A,C-diamide. NH(2) groups are provided by glutamine, and one molecule of ATP is hydrogenolyzed for each amidation. The sequence is that of Cobyric acid synthase from Salmonella agona (strain SL483).